Consider the following 30-residue polypeptide: Cycloviolin-C (30 aa).

The cyclopeptide (Gly-Asn) cross-link spans 1-30 (GIPCGESCVFIPCLTTVAGCSCKNKVCYRN). Disulfide bonds link C4–C20, C8–C22, and C13–C27.

In terms of processing, this is a cyclic peptide.

Functionally, probably participates in a plant defense mechanism. Has anti-HIV activity. The chain is Cycloviolin-C from Leonia cymosa (Sacha uba).